Consider the following 577-residue polypeptide: Cryptochrome DASH, chloroplastic/mitochondrial (577 aa).

Residues 1–53 (MIKQPFLLTKFTPFSSKSKHTLFTFHCNFSIKMASLTARTTPTVQNVPGLTPE) constitute a chloroplast and mitochondrion transit peptide. The 142-residue stretch at 78–219 (GVAIVWFRND…GNDPGSGNTT (142 aa)) folds into the Photolyase/cryptochrome alpha/beta domain. The tract at residues 550–577 (TKKTGDSKTAFSSRRGRPEDNRRKRHGY) is disordered.

Belongs to the DNA photolyase class-1 family. FAD serves as cofactor. It depends on (6R)-5,10-methylene-5,6,7,8-tetrahydrofolate as a cofactor. As to expression, expressed in the endosperm and embryo 96 hours after seed imbibition. In the embryo, detected in the root meristem, the root cap, the shoot apical meristem and the epidermis of cotyledons. In adult plants, detcted in roots, the whole leaf lamina, the stem and in glandular trichomes.

The protein resides in the plastid. Its subcellular location is the chloroplast. It is found in the mitochondrion. Functionally, may have a photoreceptor function and might bind ss- and ds-DNA in a sequence non-specific manner. Lacks photolyase activity. Has a potential role in detecting the dawn and dusk transitions and, consequently, in circadian input pathways. This is Cryptochrome DASH, chloroplastic/mitochondrial from Solanum lycopersicum (Tomato).